Here is a 291-residue protein sequence, read N- to C-terminus: 33 kDa chaperonin (291 aa).

Intrachain disulfides connect Cys237/Cys239 and Cys270/Cys273.

This sequence belongs to the HSP33 family. In terms of processing, under oxidizing conditions two disulfide bonds are formed involving the reactive cysteines. Under reducing conditions zinc is bound to the reactive cysteines and the protein is inactive.

The protein localises to the cytoplasm. Its function is as follows. Redox regulated molecular chaperone. Protects both thermally unfolding and oxidatively damaged proteins from irreversible aggregation. Plays an important role in the bacterial defense system toward oxidative stress. In Halalkalibacterium halodurans (strain ATCC BAA-125 / DSM 18197 / FERM 7344 / JCM 9153 / C-125) (Bacillus halodurans), this protein is 33 kDa chaperonin.